The sequence spans 343 residues: Autoinducer 2 import system permease protein LsrC (343 aa).

Transmembrane regions (helical) follow at residues 13-33 (FLAI…YLSF), 38-58 (MIFA…LVML), 61-81 (NIDV…GVAL), 92-112 (LFAL…VVGL), 114-134 (IPAI…MLLW), 154-174 (VALG…IGAW), 212-232 (INGM…GFVP), 251-271 (GISL…AFFL), and 283-303 (LPAW…LVLD). The tract at residues 321–343 (RFQPGNKGGKHVTPFPKRKKEVA) is disordered.

This sequence belongs to the binding-protein-dependent transport system permease family. AraH/RbsC subfamily. The complex is composed of two ATP-binding proteins (LsrA), two transmembrane proteins (LsrC and LsrD) and a solute-binding protein (LsrB).

It localises to the cell inner membrane. In terms of biological role, part of the ABC transporter complex LsrABCD involved in autoinducer 2 (AI-2) import. Probably responsible for the translocation of the substrate across the membrane. This is Autoinducer 2 import system permease protein LsrC (lsrC) from Enterobacter sp. (strain 638).